The primary structure comprises 427 residues: UDP-N-acetylglucosamine 1-carboxyvinyltransferase (427 aa).

24–25 (KN) lines the phosphoenolpyruvate pocket. Arg95 serves as a coordination point for UDP-N-acetyl-alpha-D-glucosamine. Residue Cys119 is the Proton donor of the active site. Cys119 carries the post-translational modification 2-(S-cysteinyl)pyruvic acid O-phosphothioketal. Residues 124–128 (RPVDQ), Asp308, and Val330 contribute to the UDP-N-acetyl-alpha-D-glucosamine site.

It belongs to the EPSP synthase family. MurA subfamily.

It localises to the cytoplasm. The enzyme catalyses phosphoenolpyruvate + UDP-N-acetyl-alpha-D-glucosamine = UDP-N-acetyl-3-O-(1-carboxyvinyl)-alpha-D-glucosamine + phosphate. The protein operates within cell wall biogenesis; peptidoglycan biosynthesis. Its function is as follows. Cell wall formation. Adds enolpyruvyl to UDP-N-acetylglucosamine. In Deinococcus geothermalis (strain DSM 11300 / CIP 105573 / AG-3a), this protein is UDP-N-acetylglucosamine 1-carboxyvinyltransferase.